Here is a 571-residue protein sequence, read N- to C-terminus: Proline--tRNA ligase (571 aa).

This sequence belongs to the class-II aminoacyl-tRNA synthetase family. ProS type 1 subfamily. Homodimer.

It localises to the cytoplasm. The enzyme catalyses tRNA(Pro) + L-proline + ATP = L-prolyl-tRNA(Pro) + AMP + diphosphate. In terms of biological role, catalyzes the attachment of proline to tRNA(Pro) in a two-step reaction: proline is first activated by ATP to form Pro-AMP and then transferred to the acceptor end of tRNA(Pro). As ProRS can inadvertently accommodate and process non-cognate amino acids such as alanine and cysteine, to avoid such errors it has two additional distinct editing activities against alanine. One activity is designated as 'pretransfer' editing and involves the tRNA(Pro)-independent hydrolysis of activated Ala-AMP. The other activity is designated 'posttransfer' editing and involves deacylation of mischarged Ala-tRNA(Pro). The misacylated Cys-tRNA(Pro) is not edited by ProRS. This is Proline--tRNA ligase from Actinobacillus pleuropneumoniae serotype 5b (strain L20).